A 272-amino-acid polypeptide reads, in one-letter code: tRNA pseudouridine synthase B (272 aa).

Asp-38 (nucleophile) is an active-site residue.

The protein belongs to the pseudouridine synthase TruB family. Type 1 subfamily.

It carries out the reaction uridine(55) in tRNA = pseudouridine(55) in tRNA. Its function is as follows. Responsible for synthesis of pseudouridine from uracil-55 in the psi GC loop of transfer RNAs. This is tRNA pseudouridine synthase B from Campylobacter jejuni subsp. jejuni serotype O:23/36 (strain 81-176).